A 239-amino-acid polypeptide reads, in one-letter code: Large ribosomal subunit protein uL2 (239 aa).

Disordered stretches follow at residues 1 to 20 (MGHRIKTQNRGRGGPTYRAP) and 202 to 239 (FGGGGHQHTGRPKTVSRGTSPGRKVGSVAARRTGRRKR).

This sequence belongs to the universal ribosomal protein uL2 family. Part of the 50S ribosomal subunit. Forms a bridge to the 30S subunit in the 70S ribosome.

Its function is as follows. One of the primary rRNA binding proteins. Required for association of the 30S and 50S subunits to form the 70S ribosome, for tRNA binding and peptide bond formation. It has been suggested to have peptidyltransferase activity; this is somewhat controversial. Makes several contacts with the 16S rRNA in the 70S ribosome. The polypeptide is Large ribosomal subunit protein uL2 (Methanosphaerula palustris (strain ATCC BAA-1556 / DSM 19958 / E1-9c)).